Here is a 345-residue protein sequence, read N- to C-terminus: MFKIKGLRWYMIGLVTIGTVLGYLTRNAIAAAAPTLQEQLHISTQQYSYIIAAYSACYTIMQPVAGYVLDVLGTKVGYAMFAILWALFCAGTALANSWGGLAVARGAVGMAEAAMIPAGLKASSEWFPAKERSVAVGYFNVGSSIGGMLAPPLVVWAIMAHSWQMAFLITGALSLVWALCWLYFYKHPKDQKKLSTEEREYILSGQEAQHQAGNAKRMSAWQILRNRQFWGIALPRFLAEPAWGTFNAWIPLFMFKAYGFNLKEIAMFAWMPMLFADLGCILGGYMPMLFQKYFKVNLIVSRKLVVTLGALLMIGPGTIGLFTSPYVAIACCASAALPTSPCPVR.

An N-terminal signal peptide occupies residues methionine 1 to alanine 32. 8 helical membrane passes run tyrosine 49 to leucine 69, valine 76 to asparagine 96, glycine 100 to leucine 120, phenylalanine 139 to methionine 159, methionine 165 to tyrosine 185, phenylalanine 237 to alanine 257, isoleucine 265 to tyrosine 285, and leucine 304 to serine 324.

It belongs to the major facilitator superfamily. Phthalate permease family.

It localises to the cell inner membrane. The catalysed reaction is aldehydo-D-galacturonate(out) + H(+)(out) = aldehydo-D-galacturonate(in) + H(+)(in). Inhibited by cyanide and 2,4-dinitrophenol, but not by arsenate. In terms of biological role, transport of D-galacturonate. Cannot transport the dimer digalacturonic acid. Uptake is an active process. This is Galacturonate transporter from Dickeya chrysanthemi (Pectobacterium chrysanthemi).